A 347-amino-acid chain; its full sequence is Transcription factor JunB (347 aa).

Glycyl lysine isopeptide (Lys-Gly) (interchain with G-Cter in SUMO2) cross-links involve residues lysine 4, lysine 33, and lysine 36. The tract at residues 51–73 is disordered; the sequence is KAPGARGPGPEGGGGGSYFSGQG. The segment covering 56–68 has biased composition (gly residues); that stretch reads RGPGPEGGGGGSY. Lysine 81 is covalently cross-linked (Glycyl lysine isopeptide (Lys-Gly) (interchain with G-Cter in SUMO2)). 2 positions are modified to phosphothreonine: threonine 102 and threonine 104. Serine 117 is modified (phosphoserine). Lysine 141 participates in a covalent cross-link: Glycyl lysine isopeptide (Lys-Gly) (interchain with G-Cter in SUMO2). The span at 239-253 shows a compositional bias: basic and acidic residues; sequence FKEEPQTVPEARSRD. Residues 239–260 form a disordered region; sequence FKEEPQTVPEARSRDATPPVSP. Lysine 240 bears the N6-acetyllysine; alternate mark. Lysine 240 is covalently cross-linked (Glycyl lysine isopeptide (Lys-Gly) (interchain with G-Cter in SUMO1); alternate). A Glycyl lysine isopeptide (Lys-Gly) (interchain with G-Cter in SUMO2); alternate cross-link involves residue lysine 240. Serine 251 is subject to Phosphoserine. Residue threonine 255 is modified to Phosphothreonine. Serine 259 bears the Phosphoserine mark. The basic motif stretch occupies residues 268–295; the sequence is RIKVERKRLRNRLAATKCRKRKLERIAR. Positions 268-331 constitute a bZIP domain; sequence RIKVERKRLR…AQLKQKVMTH (64 aa). Residues 296-324 form a leucine-zipper region; the sequence is LEDKVKTLKAENAGLSSTAGLLREQVAQL. A Glycyl lysine isopeptide (Lys-Gly) (interchain with G-Cter in SUMO2) cross-link involves residue lysine 343.

Belongs to the bZIP family. Jun subfamily. In terms of assembly, binds DNA as a homodimer or as a heterodimer with another member of the Jun/Fos family. Component of an AP-1 transcription factor complex composed of JUN-FOS heterodimers composed of JUN-FOS heterodimers. As part of the AP-1 transcription factor complex, forms heterodimers with FOSB, thereby binding to the AP-1 consensus sequence and stimulating transcription. Interacts with ITCH (via its WW domains). In terms of processing, ubiquitinated by ITCH, leading to its degradation.

The protein resides in the nucleus. Functionally, transcription factor involved in regulating gene activity following the primary growth factor response. Binds to the DNA sequence 5'-TGA[GC]TCA-3'. Heterodimerizes with proteins of the FOS family to form an AP-1 transcription complex, thereby enhancing its DNA binding activity to an AP-1 consensus sequence and its transcriptional activity. This chain is Transcription factor JunB (JUNB), found in Homo sapiens (Human).